An 86-amino-acid chain; its full sequence is Antimicrobial peptide 2 (86 aa).

The N-terminal stretch at 1–25 (MVNMKCVALIVIVMMAFMMVDPSMG) is a signal peptide. Cystine bridges form between C29/C40, C34/C46, and C39/C53. One can recognise a Chitin-binding type-1 domain in the interval 29-53 (CVRGRCPSGMCCSQFGYCGKGPKYC). The propeptide at 56-86 (ASTTVDHQADVAATKTAKNPTDAKLAGAGSP) is removed in mature form.

Homodimer.

Chitin-binding protein with a defensive function against numerous chitin containing fungal pathogens. It is also a potent inhibitor of Gram-positive bacteria. This Amaranthus caudatus (Love-lies-bleeding) protein is Antimicrobial peptide 2.